A 317-amino-acid chain; its full sequence is Pantothenate kinase (317 aa).

95–102 serves as a coordination point for ATP; that stretch reads GSVAVGKS.

The protein belongs to the prokaryotic pantothenate kinase family.

It is found in the cytoplasm. The catalysed reaction is (R)-pantothenate + ATP = (R)-4'-phosphopantothenate + ADP + H(+). The protein operates within cofactor biosynthesis; coenzyme A biosynthesis; CoA from (R)-pantothenate: step 1/5. This Myxococcus xanthus (strain DK1622) protein is Pantothenate kinase.